An 812-amino-acid polypeptide reads, in one-letter code: Protein FAM83G (812 aa).

An N-acetylalanine modification is found at Ala2. Residues 2 to 312 (AFSQVQCLDD…LYLMSQSVSL (311 aa)) form a DUF1669 region. Ser4 carries the phosphoserine modification. Residues 76-119 (PGSEDPRVSGRRPEPQDNGGADASEETSAAGGPPATETLPSLEY) are disordered. Positions 79-90 (EDPRVSGRRPEP) are enriched in basic and acidic residues. 3 positions are modified to phosphoserine: Ser124, Ser127, and Ser356. Disordered regions lie at residues 362–389 (KSSS…GDLS), 455–509 (ASAQ…KPRT), and 521–812 (SDIG…HKEP). Residues 455 to 467 (ASAQHQLWKQSQG) show a composition bias toward polar residues. Positions 471–480 (CPAPCPPPAP) are enriched in pro residues. Polar residues predominate over residues 545–562 (STASESEVPQQQHSSMTQ). A compositionally biased stretch (acidic residues) spans 576–586 (LDEDEDDDDDY). A compositionally biased stretch (low complexity) spans 589–598 (LSDQDSLSGS). A phosphoserine mark is found at Ser609, Ser613, Ser615, and Ser649. Positions 721 to 731 (SSSKKASPAAA) are enriched in low complexity. A compositionally biased stretch (basic and acidic residues) spans 761 to 772 (LRAELRATEEHA).

It belongs to the FAM83 family. Interacts with SMAD1 (via MH2 domain); in a SMAD4-independent manner. Directly interacts (via DUF1669) with casein kinase isoforms CSNK1A1 and CSNK1A1L. In terms of processing, BMP signaling induces the phosphorylation by BMPR1A at Ser-609, Ser-613 and Ser-615. Phosphorylation at Ser-609 is necessary for the activation of SMAD4-independent BMP target genes such as NEDD9 and ASNS. Phosphorylated by CSNK1A1.

The protein resides in the cytoplasm. It localises to the cytosol. The protein localises to the nucleus. Substrate for type I BMP receptor kinase involved in regulation of some target genes of the BMP signaling pathway. Also regulates the expression of several non-BMP target genes, suggesting a role in other signaling pathways. The protein is Protein FAM83G (Fam83g) of Mus musculus (Mouse).